We begin with the raw amino-acid sequence, 638 residues long: Asparagine--tRNA ligase, cytoplasmic 2 (638 aa).

Over residues 1 to 16 the composition is skewed to basic and acidic residues; it reads MESHGKTHQKEHDNDL. Disordered regions lie at residues 1 to 23 and 62 to 87; these read MESH…PITL and VKKN…DQAH.

Belongs to the class-II aminoacyl-tRNA synthetase family.

Its subcellular location is the cytoplasm. The protein localises to the cytosol. It catalyses the reaction tRNA(Asn) + L-asparagine + ATP = L-asparaginyl-tRNA(Asn) + AMP + diphosphate + H(+). The polypeptide is Asparagine--tRNA ligase, cytoplasmic 2 (Arabidopsis thaliana (Mouse-ear cress)).